The chain runs to 183 residues: Bifunctional protein PyrR (183 aa).

Residues 102–114 (VVLVDDVLYTGRT) carry the PRPP-binding motif.

This sequence belongs to the purine/pyrimidine phosphoribosyltransferase family. PyrR subfamily. As to quaternary structure, homodimer and homohexamer; in equilibrium.

The enzyme catalyses UMP + diphosphate = 5-phospho-alpha-D-ribose 1-diphosphate + uracil. Regulates transcriptional attenuation of the pyrimidine nucleotide (pyr) operon by binding in a uridine-dependent manner to specific sites on pyr mRNA. This disrupts an antiterminator hairpin in the RNA and favors formation of a downstream transcription terminator, leading to a reduced expression of downstream genes. Its function is as follows. Also displays a weak uracil phosphoribosyltransferase activity which is not physiologically significant. This is Bifunctional protein PyrR from Listeria monocytogenes serotype 4b (strain CLIP80459).